We begin with the raw amino-acid sequence, 344 residues long: Beta-1,4-galactosyltransferase 4 (344 aa).

Residues 1-12 (MGCNPPYLLSYR) lie on the Cytoplasmic side of the membrane. A helical; Signal-anchor for type II membrane protein transmembrane segment spans residues 13–38 (LRLLLLFTLCLTVLGWATSNYFVGAI). Residues 39–344 (QVIPRAKNFM…NITVDFWTAA (306 aa)) lie on the Lumenal side of the membrane. A disulfide bond links cysteine 77 and cysteine 118. UDP-alpha-D-galactose-binding positions include 129 to 133 (PHRNR), 168 to 170 (FNR), and 195 to 196 (VD). The cysteines at positions 189 and 208 are disulfide-linked. Aspartate 196 is a binding site for Mn(2+). Asparagine 220 is a glycosylation site (N-linked (GlcNAc...) asparagine). Residues tyrosine 224 and tryptophan 256 each contribute to the UDP-alpha-D-galactose site. Residue 258–261 (GEDD) participates in N-acetyl-D-glucosamine binding. Position 289 (histidine 289) interacts with Mn(2+). Position 289–291 (289–291 (HTR)) interacts with UDP-alpha-D-galactose. Arginine 301 serves as a coordination point for N-acetyl-D-glucosamine. Asparagine 335 carries an N-linked (GlcNAc...) asparagine glycan.

The protein belongs to the glycosyltransferase 7 family. Interacts with SLC35A2/UGT1. Mn(2+) serves as cofactor.

Its subcellular location is the golgi apparatus membrane. It is found in the secreted. It carries out the reaction N-acetyl-D-glucosamine + UDP-alpha-D-galactose = beta-D-galactosyl-(1-&gt;4)-N-acetyl-D-glucosamine + UDP + H(+). It catalyses the reaction a beta-D-GlcNAc-(1-&gt;3)-beta-D-Gal-(1-&gt;4)-beta-D-Glc-(1&lt;-&gt;1)-Cer(d18:1(4E)) + UDP-alpha-D-galactose = a neolactoside nLc4Cer(d18:1(4E)) + UDP + H(+). The catalysed reaction is 3-O-{beta-D-galactosyl-(1-&gt;3)-[6-O-sulfo-N-acetyl-beta-D-glucosaminyl-(1-&gt;6)]-N-acetyl-alpha-D-galactosaminyl}-L-seryl-[protein] + UDP-alpha-D-galactose = 3-O-{beta-D-galactosyl-(1-&gt;3)-[beta-D-galactosyl-(1-&gt;4)-6-O-sulfo-N-acetyl-beta-D-glucosaminyl-(1-&gt;6)]-N-acetyl-alpha-D-galactosaminyl}-L-seryl-[protein] + UDP + H(+). The enzyme catalyses 3-O-{beta-D-galactosyl-(1-&gt;3)-[6-O-sulfo-N-acetyl-beta-D-glucosaminyl-(1-&gt;6)]-N-acetyl-alpha-D-galactosaminyl}-L-threonyl-[protein] + UDP-alpha-D-galactose = 3-O-{beta-D-galactosyl-(1-&gt;3)-[beta-D-galactosyl-(1-&gt;4)-6-O-sulfo-N-acetyl-beta-D-glucosaminyl-(1-&gt;6)]-N-acetyl-alpha-D-galactosaminyl}-L-threonyl-[protein] + UDP + H(+). Its pathway is protein modification; protein glycosylation. It participates in glycolipid biosynthesis. Its function is as follows. Galactose (Gal) transferase involved in the synthesis of terminal N-acetyllactosamine (LacNac) unit present on glycan chains of glycoproteins and glycosphingolipids. Catalyzes the transfer of Gal residue via a beta1-&gt;4 linkage from UDP-Gal to the non-reducing terminal N-acetyl glucosamine 6-O-sulfate (6-O-sulfoGlcNAc) in the linearly growing chain of both N- and O-linked keratan sulfate proteoglycans. Cooperates with B3GNT7 N-acetyl glucosamine transferase and CHST6 and CHST1 sulfotransferases to construct and elongate mono- and disulfated disaccharide units [-&gt;3Galbeta1-&gt;4(6-sulfoGlcNAcbeta)1-&gt;] and [-&gt;3(6-sulfoGalbeta)1-&gt;4(6-sulfoGlcNAcbeta)1-&gt;] within keratan sulfate polymer. Transfers Gal residue via a beta1-&gt;4 linkage to terminal 6-O-sulfoGlcNAc within the LacNac unit of core 2 O-glycans forming 6-sulfo-sialyl-Lewis X (sLex). May contribute to the generation of sLex epitope on mucin-type glycoproteins that serve as ligands for SELL/L-selectin, a major regulator of leukocyte migration. In the biosynthesis pathway of neolacto-series glycosphingolipids, transfers Gal residue via a beta1-&gt;4 linkage to terminal GlcNAc of a lactotriaosylceramide (Lc3Cer) acceptor to form a neolactotetraosylceramide. This is Beta-1,4-galactosyltransferase 4 (B4galt4) from Rattus norvegicus (Rat).